The chain runs to 128 residues: Small ribosomal subunit protein uS13 (128 aa).

The tract at residues 98 to 128 is disordered; that stretch reads VRGQRTRTNARTRKGPRPRIGVKKKGKQAGS. The segment covering 101–128 has biased composition (basic residues); sequence QRTRTNARTRKGPRPRIGVKKKGKQAGS.

Belongs to the universal ribosomal protein uS13 family. As to quaternary structure, part of the 30S ribosomal subunit. Forms a loose heterodimer with protein S19. Forms two bridges to the 50S subunit in the 70S ribosome.

Located at the top of the head of the 30S subunit, it contacts several helices of the 16S rRNA. In the 70S ribosome it contacts the 23S rRNA (bridge B1a) and protein L5 of the 50S subunit (bridge B1b), connecting the 2 subunits; these bridges are implicated in subunit movement. Contacts the tRNAs in the A and P-sites. The protein is Small ribosomal subunit protein uS13 of Thermomicrobium roseum (strain ATCC 27502 / DSM 5159 / P-2).